Consider the following 107-residue polypeptide: Nucleoid-associated protein XF_1808 (107 aa).

This sequence belongs to the YbaB/EbfC family. Homodimer.

The protein localises to the cytoplasm. Its subcellular location is the nucleoid. Functionally, binds to DNA and alters its conformation. May be involved in regulation of gene expression, nucleoid organization and DNA protection. The polypeptide is Nucleoid-associated protein XF_1808 (Xylella fastidiosa (strain 9a5c)).